The following is a 356-amino-acid chain: HORMA domain-containing protein 1 (356 aa).

The HORMA domain maps to 24 to 225; the sequence is QQSLVLVKKL…TPFHSIKMNV (202 aa). Disordered regions lie at residues 282 to 305 and 333 to 356; these read ETQETQEQPHRHTKEDFSTNPKMD and QLEFPLSQDPQPSVPKRRKVSVPK. Basic and acidic residues predominate over residues 288–298; it reads EQPHRHTKEDF. A compositionally biased stretch (basic residues) spans 347–356; the sequence is PKRRKVSVPK.

The protein localises to the nucleus. The protein resides in the chromosome. In terms of biological role, plays a key role in meiotic progression by ensuring that sufficient numbers of processed DNA double-strand breaks (DSBs) are available for successful homology search, promoting synaptonemal-complex formation independently and playing key role in the male mid-pachytene checkpoint and the female meiotic prophase checkpoint. This chain is HORMA domain-containing protein 1 (hormad1), found in Danio rerio (Zebrafish).